The primary structure comprises 374 residues: Chaperone protein DnaJ (374 aa).

Residues 5 to 70 (DYYEVLGISR…SKRAAYDQFG (66 aa)) enclose the J domain. The CR-type zinc finger occupies 129-207 (GKTVKINIPG…CHGQGRVRQE (79 aa)). Zn(2+)-binding residues include cysteine 142, cysteine 145, cysteine 159, cysteine 162, cysteine 181, cysteine 184, cysteine 195, and cysteine 198. 4 CXXCXGXG motif repeats span residues 142–149 (CEACDGSG), 159–166 (CGTCQGMG), 181–188 (CPTCRGSG), and 195–202 (CKSCHGQG). The segment at 216–238 (PGVDTGDRIRLSGEGEMGVDGGP) is disordered.

Belongs to the DnaJ family. As to quaternary structure, homodimer. Zn(2+) serves as cofactor.

Its subcellular location is the cytoplasm. Functionally, participates actively in the response to hyperosmotic and heat shock by preventing the aggregation of stress-denatured proteins and by disaggregating proteins, also in an autonomous, DnaK-independent fashion. Unfolded proteins bind initially to DnaJ; upon interaction with the DnaJ-bound protein, DnaK hydrolyzes its bound ATP, resulting in the formation of a stable complex. GrpE releases ADP from DnaK; ATP binding to DnaK triggers the release of the substrate protein, thus completing the reaction cycle. Several rounds of ATP-dependent interactions between DnaJ, DnaK and GrpE are required for fully efficient folding. Also involved, together with DnaK and GrpE, in the DNA replication of plasmids through activation of initiation proteins. The sequence is that of Chaperone protein DnaJ from Marinobacter nauticus (strain ATCC 700491 / DSM 11845 / VT8) (Marinobacter aquaeolei).